The primary structure comprises 310 residues: Putative olfactory receptor 7A2 (310 aa).

Residues Met-1–Pro-26 lie on the Extracellular side of the membrane. An N-linked (GlcNAc...) asparagine glycan is attached at Asn-6. The chain crosses the membrane as a helical span at residues Phe-27–Ile-47. Residues Leu-48–Cys-55 lie on the Cytoplasmic side of the membrane. A helical membrane pass occupies residues Leu-56 to Ser-76. Over Thr-77–Thr-100 the chain is Extracellular. Cys-98 and Cys-190 are oxidised to a cystine. A helical transmembrane segment spans residues Gln-101–Tyr-121. Residues Asp-122–Gln-140 lie on the Cytoplasmic side of the membrane. Residues Leu-141–Ser-161 form a helical membrane-spanning segment. Residues Leu-162 to Met-198 are Extracellular-facing. The chain crosses the membrane as a helical span at residues Val-199–Ser-218. The Cytoplasmic portion of the chain corresponds to Tyr-219 to Ala-238. A helical transmembrane segment spans residues Leu-239–Val-259. The Extracellular segment spans residues Tyr-260–Thr-272. A helical transmembrane segment spans residues Ala-273 to Leu-293. Residues Arg-294–Gln-310 lie on the Cytoplasmic side of the membrane.

This sequence belongs to the G-protein coupled receptor 1 family.

The protein resides in the cell membrane. Odorant receptor. The chain is Putative olfactory receptor 7A2 (OR7A2P) from Homo sapiens (Human).